The sequence spans 168 residues: Transcription antitermination protein NusB (168 aa).

The protein belongs to the NusB family.

Its function is as follows. Involved in transcription antitermination. Required for transcription of ribosomal RNA (rRNA) genes. Binds specifically to the boxA antiterminator sequence of the ribosomal RNA (rrn) operons. This Chlamydia trachomatis serovar L2 (strain ATCC VR-902B / DSM 19102 / 434/Bu) protein is Transcription antitermination protein NusB.